The primary structure comprises 560 residues: Dimethylaniline monooxygenase [N-oxide-forming] 4 (560 aa).

FAD contacts are provided by residues 9 to 13 (GAGVS), Glu-32, and 40 to 41 (LW). NADP(+) contacts are provided by residues 60–61 (TN) and 195–198 (TGGD). A helical membrane pass occupies residues 519–539 (APVLIVSLLLIYKSSLFLELV).

This sequence belongs to the FMO family. The cofactor is FAD. In terms of tissue distribution, detected in liver and kidney (at protein level).

It localises to the microsome membrane. The protein localises to the endoplasmic reticulum membrane. It carries out the reaction N,N-dimethylaniline + NADPH + O2 + H(+) = N,N-dimethylaniline N-oxide + NADP(+) + H2O. Its function is as follows. This protein is involved in the oxidative metabolism of a variety of xenobiotics such as drugs and pesticides. The chain is Dimethylaniline monooxygenase [N-oxide-forming] 4 (Fmo4) from Rattus norvegicus (Rat).